The sequence spans 375 residues: Growth/differentiation factor 8 (375 aa).

The signal sequence occupies residues 1-18 (MQKLQIFVYIYLFMLLVA). The propeptide occupies 19 to 266 (GPVDLNENSE…VTDTPKRSRR (248 aa)). N-linked (GlcNAc...) asparagine glycosylation is found at Asn48 and Asn71. 4 disulfides stabilise this stretch: Cys272-Cys282, Cys281-Cys340, Cys309-Cys372, and Cys313-Cys374.

The protein belongs to the TGF-beta family. Homodimer; disulfide-linked. Interacts with WFIKKN2, leading to inhibit its activity. Interacts with FSTL3. Post-translationally, synthesized as large precursor molecule that undergoes proteolytic cleavage to generate an N-terminal propeptide and a disulfide linked C-terminal dimer, which is the biologically active molecule. The circulating form consists of a latent complex of the C-terminal dimer and other proteins, including its propeptide, which maintain the C-terminal dimer in a latent, inactive state. Ligand activation requires additional cleavage of the prodomain by a tolloid-like metalloproteinase.

Its subcellular location is the secreted. Functionally, acts specifically as a negative regulator of skeletal muscle growth. The chain is Growth/differentiation factor 8 (MSTN) from Capra ibex (Ibex).